The following is a 554-amino-acid chain: GPI alpha-1,2-mannosyltransferase 3 (554 aa).

Asn-26 is a glycosylation site (N-linked (GlcNAc...) asparagine). A run of 9 helical transmembrane segments spans residues 63–83, 136–156, 192–212, 224–244, 255–275, 315–335, 340–360, 362–382, and 387–407; these read LLLFTIALRILNCFLVQTSFV, VQLLIWIPRLAQALLSAVADV, LTNTMETVLTIIALFYYPLEG, LVALAFIIRPTAVILWTPLLF, DLILHHFLPVGFVTLSLSLMI, GFPVILGTHLPFFIHGCYLAP, ILLVTVLWTLLVYSMLSHKEF, FIYPVLPFCMVFCGYSLTHLK, and PALSFLFLSNLFLALYTGLVH. N-linked (GlcNAc...) asparagine glycosylation is present at Asn-427.

Belongs to the glycosyltransferase 22 family. PIGB subfamily.

It localises to the endoplasmic reticulum membrane. The protein operates within glycolipid biosynthesis; glycosylphosphatidylinositol-anchor biosynthesis. Functionally, alpha-1,2-mannosyltransferase that catalyzes the transfer of the third mannose, via an alpha-1,2 bond, from a dolichol-phosphate-mannose (Dol-P-Man) to an alpha-D-Man-(1-&gt;6)-2-PEtn-alpha-D-Man-(1-&gt;4)-alpha-D-GlcN-(1-&gt;6)-(1-radyl,2-acyl-sn-glycero-3-phospho)-2-acyl-inositol intermediate to generate an alpha-D-Man-(1-&gt;2)-alpha-D-Man-(1-&gt;6)-2-PEtn-alpha-D-Man-(1-&gt;4)-alpha-D-GlcN-(1-&gt;6)-(1-radyl,2-acyl-sn-glycero-3-phospho)-2-acyl-inositol (also termed H6) and participates in the nineth step of the glycosylphosphatidylinositol-anchor biosynthesis. May also add the third mannose to an alpha-D-Man-(1-&gt;6)-alpha-D-Man-(1-&gt;4)-alpha-D-GlcN-(1-&gt;6)-(1-radyl,2-acyl-sn-glycero-3-phospho)-2-acyl-inositol (also termed H3) intermediate generating an alpha-D-Man-(1-&gt;2)-alpha-D-Man-(1-&gt;6)-alpha-D-Man-(1-&gt;4)-alpha-D-GlcN-(1-&gt;6)-(1-radyl,2-acyl-sn-glycero-3-phospho)-2-acyl-inositol (also termed H4). This is GPI alpha-1,2-mannosyltransferase 3 from Homo sapiens (Human).